The sequence spans 406 residues: Succinylornithine transaminase (406 aa).

Residue lysine 252 is modified to N6-(pyridoxal phosphate)lysine.

Belongs to the class-III pyridoxal-phosphate-dependent aminotransferase family. AstC subfamily. Pyridoxal 5'-phosphate is required as a cofactor.

It catalyses the reaction N(2)-succinyl-L-ornithine + 2-oxoglutarate = N-succinyl-L-glutamate 5-semialdehyde + L-glutamate. It functions in the pathway amino-acid degradation; L-arginine degradation via AST pathway; L-glutamate and succinate from L-arginine: step 3/5. Catalyzes the transamination of N(2)-succinylornithine and alpha-ketoglutarate into N(2)-succinylglutamate semialdehyde and glutamate. Can also act as an acetylornithine aminotransferase. The chain is Succinylornithine transaminase from Escherichia coli O157:H7.